A 356-amino-acid chain; its full sequence is Adenine deaminase (356 aa).

Zn(2+)-binding residues include H23, H25, and H211. E214 functions as the Proton donor in the catalytic mechanism. D292 is a binding site for Zn(2+). D293 is a binding site for substrate.

Belongs to the metallo-dependent hydrolases superfamily. Adenosine and AMP deaminases family. Adenine deaminase type 2 subfamily. The cofactor is Zn(2+).

It localises to the cytoplasm. The protein localises to the nucleus. The enzyme catalyses adenine + H2O + H(+) = hypoxanthine + NH4(+). In terms of biological role, catalyzes the hydrolytic deamination of adenine to hypoxanthine. Plays an important role in the purine salvage pathway and in nitrogen catabolism. This Candida albicans (strain SC5314 / ATCC MYA-2876) (Yeast) protein is Adenine deaminase.